We begin with the raw amino-acid sequence, 649 residues long: MAPGEKIKAKIKKNLPVTGPQAPTIKELMRWYCLNTNTHGCRRIVVSRGRLRRLLWIGFTLTAVALILWQCALLVFSFYTVSVSIKVHFRKLDFPAVTICNINPYKYSTVRHLLADLEQETREALKSLYGFPESRKRREAESWNSVSEGKQPRFSHRIPLLIFDQDEKGKARDFFTGRKRKVGGSIIHKASNVMHIESKQVVGFQLCSNDTSDCATYTFSSGINAIQEWYKLHYMNIMAQVPLEKKINMSYSAEELLVTCFFDGVSCDARNFTLFHHPMHGNCYTFNNRENETILSTSMGGSEYGLQVILYINEEEYNPFLVSSTGAKVIIHRQDEYPFVEDVGTEIETAMVTSIGMHLTESFKLSEPYSQCTEDGSDVPIRNIYNAAYSLQICLHSCFQTKMVEKCGCAQYSQPLPPAANYCNYQQHPNWMYCYYQLHRAFVQEELGCQSVCKEACSFKEWTLTTSLAQWPSVVSEKWLLPVLTWDQGRQVNKKLNKTDLAKLLIFYKDLNQRSIMESPANSIEMLLSNFGGQLGLWMSCSVVCVIEIIEVFFIDFFSIIARRQWQKAKEWWAWKQAPPCPEAPRSPQGQDNPALDIDDDLPTFNSALHLPPALGTQVPGTPPPKYNTLRLERAFSNQLTDTQMLDEL.

The Cytoplasmic portion of the chain corresponds to 1–55 (MAPGEKIKAKIKKNLPVTGPQAPTIKELMRWYCLNTNTHGCRRIVVSRGRLRRLL). A helical transmembrane segment spans residues 56-76 (WIGFTLTAVALILWQCALLVF). Over 77–541 (SFYTVSVSIK…GGQLGLWMSC (465 aa)) the chain is Extracellular. 8 disulfide bridges follow: C100–C283, C207–C214, C260–C267, C372–C457, C394–C453, C398–C449, C407–C434, and C409–C423. Residues 135 to 221 (RKRREAESWN…SDCATYTFSS (87 aa)) form a gating release of inhibition by proteolysis (GRIP); protease-sensitive region that is responsible for the proteolytic activation of the channel region. The N-linked (GlcNAc...) asparagine glycan is linked to N209. N497 carries an N-linked (GlcNAc...) asparagine glycan. The helical transmembrane segment at 542–562 (SVVCVIEIIEVFFIDFFSIIA) threads the bilayer. The Cytoplasmic portion of the chain corresponds to 563–649 (RRQWQKAKEW…LTDTQMLDEL (87 aa)). Residues 623–627 (PPPKY) carry the PY motif; recruits WW domain-containing proteins and is thereby required for ubiquitination and inhibition of the channel by NEDD4 and NEDD4L motif.

It belongs to the amiloride-sensitive sodium channel (TC 1.A.6) family. SCNN1G subfamily. Component of the heterotrimeric epithelial sodium channel (ENaC) composed of an alpha/SCNN1A, a beta/SCNN1B and a gamma/SCNN1G subunit. An additional delta/SCNN1D subunit can replace the alpha/SCNN1A subunit to form an alternative channel with specific properties. Interacts with WWP1 (via WW domains). Interacts with WWP2 (via WW domains); inhibits the channel. Interacts with the full-length immature form of PCSK9 (pro-PCSK9); inhibits ENaC by promoting its proteasomal degradation. Interacts with BPIFA1; the interaction is indirect via SCNN1B and inhibits the proteolytic maturation of SCNN1A and SCNN1G and the activation of ENaC. Post-translationally, phosphorylated on serine and threonine residues. Aldosterone and insulin increase the basal level of phosphorylation. In terms of processing, ubiquitinated. Can be ubiquitinated at multiple sites and undergo monoubiquitination and polyubiquitination. Ubiquitination by NEDD4 or NEDD4L inhibits the ENaC channel through endocytosis, intracellular retention and degradation of its individual subunits. ENaC is activated through the proteolytic maturation of its subunits. Furin cleaves the SCNN1G subunit first, followed by cleavage by prostasin (PRSS8), which results in a stepwise increase in the open probability of the channel due to the release of an inhibitory tract. BPIFA1, which is recruited by the SCNN1B subunit, prevents the proteolytic activation of ENaC. Post-translationally, N-glycosylated. N-linked glycans are processed to complex type during ENaC complex assembly and transport to the plasma membrane. Expressed in kidney (at protein level).

It is found in the apical cell membrane. The enzyme catalyses Na(+)(in) = Na(+)(out). Originally identified and characterized by its inhibition by the diuretic drug amiloride. Its function is as follows. This is one of the three pore-forming subunits of the heterotrimeric epithelial sodium channel (ENaC), a critical regulator of sodium balance and fluid homeostasis. ENaC operates in epithelial tissues, where it mediates the electrodiffusion of sodium ions from extracellular fluid through the apical membrane of cells, with water following osmotically. It plays a key role in maintaining sodium homeostasis through electrogenic sodium reabsorption in the kidneys. Additionally, ENaC is essential for airway surface liquid homeostasis, which is crucial for proper mucus clearance. This chain is Epithelial sodium channel subunit gamma, found in Homo sapiens (Human).